A 283-amino-acid chain; its full sequence is Pantothenate synthetase (283 aa).

Met-30–His-37 is a binding site for ATP. Residue His-37 is the Proton donor of the active site. Gln-61 contacts (R)-pantoate. Gln-61 serves as a coordination point for beta-alanine. Gly-149–Asp-152 is an ATP binding site. Position 155 (Gln-155) interacts with (R)-pantoate. Residues Val-178 and Leu-186–Arg-189 each bind ATP.

The protein belongs to the pantothenate synthetase family. As to quaternary structure, homodimer.

The protein resides in the cytoplasm. It catalyses the reaction (R)-pantoate + beta-alanine + ATP = (R)-pantothenate + AMP + diphosphate + H(+). It participates in cofactor biosynthesis; (R)-pantothenate biosynthesis; (R)-pantothenate from (R)-pantoate and beta-alanine: step 1/1. Catalyzes the condensation of pantoate with beta-alanine in an ATP-dependent reaction via a pantoyl-adenylate intermediate. The sequence is that of Pantothenate synthetase from Azotobacter vinelandii (strain DJ / ATCC BAA-1303).